Here is an 828-residue protein sequence, read N- to C-terminus: Beta-galactosidase (828 aa).

The N-terminal stretch at 1-20 (MKMKQFNLLSLFLILITSFG) is a signal peptide. Residues Asn23 and Asn153 are each glycosylated (N-linked (GlcNAc...) asparagine). The active-site Proton donor is the Glu183. Glu252 acts as the Nucleophile in catalysis. N-linked (GlcNAc...) asparagine glycans are attached at residues Asn253, Asn350, Asn379, Asn492, Asn667, Asn799, and Asn803. The region spanning 742–828 (AHEHNKVELS…PKRLFVEVEC (87 aa)) is the SUEL-type lectin domain.

Belongs to the glycosyl hydrolase 35 family.

It is found in the secreted. The protein localises to the extracellular space. The protein resides in the apoplast. The enzyme catalyses Hydrolysis of terminal non-reducing beta-D-galactose residues in beta-D-galactosides.. The protein is Beta-galactosidase of Brassica oleracea (Wild cabbage).